Consider the following 647-residue polypeptide: DNA ligase (647 aa).

NAD(+) contacts are provided by residues 30–34, 79–80, and glutamate 105; these read DEEYD and SM. Catalysis depends on lysine 107, which acts as the N6-AMP-lysine intermediate. NAD(+)-binding residues include arginine 128, glutamate 162, and lysine 301. Positions 395, 398, 411, and 416 each coordinate Zn(2+). The BRCT domain maps to 570–647; the sequence is KSDSVIFGKT…ESAFNELVKE (78 aa).

The protein belongs to the NAD-dependent DNA ligase family. LigA subfamily. Requires Mg(2+) as cofactor. Mn(2+) serves as cofactor.

It catalyses the reaction NAD(+) + (deoxyribonucleotide)n-3'-hydroxyl + 5'-phospho-(deoxyribonucleotide)m = (deoxyribonucleotide)n+m + AMP + beta-nicotinamide D-nucleotide.. Functionally, DNA ligase that catalyzes the formation of phosphodiester linkages between 5'-phosphoryl and 3'-hydroxyl groups in double-stranded DNA using NAD as a coenzyme and as the energy source for the reaction. It is essential for DNA replication and repair of damaged DNA. This is DNA ligase from Campylobacter jejuni subsp. doylei (strain ATCC BAA-1458 / RM4099 / 269.97).